The chain runs to 470 residues: Ribosomal protein uS12 methylthiotransferase RimO (470 aa).

An MTTase N-terminal domain is found at 4-120; sequence TRVYLHTLGC…IARVVSDAQA (117 aa). [4Fe-4S] cluster is bound by residues C13, C49, C83, C155, C159, and C162. A Radical SAM core domain is found at 141-371; it reads SLPSHTAYLK…MALQQEISRE (231 aa). Positions 374-442 constitute a TRAM domain; sequence RAMVGRRLEV…EYDLVGHVVA (69 aa). Residues 447 to 470 form a disordered region; sequence RARRPLPAPAGGETPRRGGLPVVG.

This sequence belongs to the methylthiotransferase family. RimO subfamily. It depends on [4Fe-4S] cluster as a cofactor.

It is found in the cytoplasm. The enzyme catalyses L-aspartate(89)-[ribosomal protein uS12]-hydrogen + (sulfur carrier)-SH + AH2 + 2 S-adenosyl-L-methionine = 3-methylsulfanyl-L-aspartate(89)-[ribosomal protein uS12]-hydrogen + (sulfur carrier)-H + 5'-deoxyadenosine + L-methionine + A + S-adenosyl-L-homocysteine + 2 H(+). Its function is as follows. Catalyzes the methylthiolation of an aspartic acid residue of ribosomal protein uS12. The protein is Ribosomal protein uS12 methylthiotransferase RimO of Anaeromyxobacter sp. (strain Fw109-5).